The following is a 324-amino-acid chain: Quinolinate synthase (324 aa).

H39 and S56 together coordinate iminosuccinate. Residue C101 participates in [4Fe-4S] cluster binding. Residues 127-129 and S144 contribute to the iminosuccinate site; that span reads YIN. C187 is a binding site for [4Fe-4S] cluster. Residues 213 to 215 and T230 each bind iminosuccinate; that span reads HPE. C280 is a [4Fe-4S] cluster binding site.

The protein belongs to the quinolinate synthase family. Type 2 subfamily. It depends on [4Fe-4S] cluster as a cofactor.

The protein localises to the cytoplasm. It catalyses the reaction iminosuccinate + dihydroxyacetone phosphate = quinolinate + phosphate + 2 H2O + H(+). Its pathway is cofactor biosynthesis; NAD(+) biosynthesis; quinolinate from iminoaspartate: step 1/1. In terms of biological role, catalyzes the condensation of iminoaspartate with dihydroxyacetone phosphate to form quinolinate. This Nostoc punctiforme (strain ATCC 29133 / PCC 73102) protein is Quinolinate synthase.